Here is a 175-residue protein sequence, read N- to C-terminus: Large ribosomal subunit protein uL10 (175 aa).

Belongs to the universal ribosomal protein uL10 family. Part of the ribosomal stalk of the 50S ribosomal subunit. The N-terminus interacts with L11 and the large rRNA to form the base of the stalk. The C-terminus forms an elongated spine to which L12 dimers bind in a sequential fashion forming a multimeric L10(L12)X complex.

Functionally, forms part of the ribosomal stalk, playing a central role in the interaction of the ribosome with GTP-bound translation factors. This Delftia acidovorans (strain DSM 14801 / SPH-1) protein is Large ribosomal subunit protein uL10.